The chain runs to 494 residues: Amidophosphoribosyltransferase (494 aa).

A propeptide spanning residues 1–10 (MSNYSGLNEE) is cleaved from the precursor. Cys-11 (nucleophile) is an active-site residue. A Glutamine amidotransferase type-2 domain is found at 11–231 (CGVFGIWNHP…AGEYVVITDE (221 aa)). Residues Ser-294, Asp-356, and Asp-357 each coordinate Mg(2+).

The protein in the C-terminal section; belongs to the purine/pyrimidine phosphoribosyltransferase family. The cofactor is Mg(2+).

It catalyses the reaction 5-phospho-beta-D-ribosylamine + L-glutamate + diphosphate = 5-phospho-alpha-D-ribose 1-diphosphate + L-glutamine + H2O. It participates in purine metabolism; IMP biosynthesis via de novo pathway; N(1)-(5-phospho-D-ribosyl)glycinamide from 5-phospho-alpha-D-ribose 1-diphosphate: step 1/2. In terms of biological role, catalyzes the formation of phosphoribosylamine from phosphoribosylpyrophosphate (PRPP) and glutamine. The polypeptide is Amidophosphoribosyltransferase (Staphylococcus epidermidis (strain ATCC 35984 / DSM 28319 / BCRC 17069 / CCUG 31568 / BM 3577 / RP62A)).